Consider the following 460-residue polypeptide: Tyrosine-protein phosphatase non-receptor type 18 (460 aa).

The 266-residue stretch at 26–291 (LAGEFSDIQA…RFLYHTVAQM (266 aa)) folds into the Tyrosine-protein phosphatase domain. Substrate contacts are provided by residues Asp-197, 229 to 235 (CSAGCGR), and Gln-276. Catalysis depends on Cys-229, which acts as the Phosphocysteine intermediate. The segment at 361–460 (GAPAGAGSGT…RDPPAEWTRV (100 aa)) is disordered. A compositionally biased stretch (gly residues) spans 364-378 (AGAGSGTQTGTGTGT). Tyr-389 carries the phosphotyrosine modification. The residue at position 393 (Thr-393) is a Phosphothreonine. At Tyr-426 the chain carries Phosphotyrosine. Residues 449–460 (GPRDPPAEWTRV) show a composition bias toward basic and acidic residues.

It belongs to the protein-tyrosine phosphatase family. Non-receptor class 4 subfamily. As to quaternary structure, interacts with PSTPIP1. In terms of tissue distribution, expressed in brain, colon and several tumor-derived cell lines.

The protein resides in the nucleus. The protein localises to the cytoplasm. It catalyses the reaction O-phospho-L-tyrosyl-[protein] + H2O = L-tyrosyl-[protein] + phosphate. Differentially dephosphorylate autophosphorylated tyrosine kinases which are known to be overexpressed in tumor tissues. The polypeptide is Tyrosine-protein phosphatase non-receptor type 18 (PTPN18) (Homo sapiens (Human)).